Consider the following 252-residue polypeptide: Imidazole glycerol phosphate synthase subunit HisF (252 aa).

Catalysis depends on residues D11 and D130.

Belongs to the HisA/HisF family. In terms of assembly, heterodimer of HisH and HisF.

It localises to the cytoplasm. It carries out the reaction 5-[(5-phospho-1-deoxy-D-ribulos-1-ylimino)methylamino]-1-(5-phospho-beta-D-ribosyl)imidazole-4-carboxamide + L-glutamine = D-erythro-1-(imidazol-4-yl)glycerol 3-phosphate + 5-amino-1-(5-phospho-beta-D-ribosyl)imidazole-4-carboxamide + L-glutamate + H(+). It participates in amino-acid biosynthesis; L-histidine biosynthesis; L-histidine from 5-phospho-alpha-D-ribose 1-diphosphate: step 5/9. Its function is as follows. IGPS catalyzes the conversion of PRFAR and glutamine to IGP, AICAR and glutamate. The HisF subunit catalyzes the cyclization activity that produces IGP and AICAR from PRFAR using the ammonia provided by the HisH subunit. The polypeptide is Imidazole glycerol phosphate synthase subunit HisF (Bacillus pumilus (strain SAFR-032)).